The following is a 117-amino-acid chain: Large ribosomal subunit protein bL20c (117 aa).

It belongs to the bacterial ribosomal protein bL20 family.

Its subcellular location is the plastid. The protein localises to the chloroplast. In terms of biological role, binds directly to 23S ribosomal RNA and is necessary for the in vitro assembly process of the 50S ribosomal subunit. It is not involved in the protein synthesizing functions of that subunit. This is Large ribosomal subunit protein bL20c from Phalaenopsis aphrodite subsp. formosana (Moth orchid).